Reading from the N-terminus, the 123-residue chain is Small ribosomal subunit protein uS12c (123 aa).

This sequence belongs to the universal ribosomal protein uS12 family. As to quaternary structure, part of the 30S ribosomal subunit.

The protein resides in the plastid. It localises to the chloroplast. With S4 and S5 plays an important role in translational accuracy. Located at the interface of the 30S and 50S subunits. This is Small ribosomal subunit protein uS12c (rps12) from Chlorella vulgaris (Green alga).